Reading from the N-terminus, the 929-residue chain is ATP-dependent DNA helicase PIF1 (929 aa).

A mitochondrion-targeting transit peptide spans 1–52 (MLRRLLQPAYNVALSGTSASTLPRKSASVGLVRTALMPVDYNAGALFCAMRF). The tract at residues 55-89 (GTEKERKREPKRGSKRRSKATTTLSTPTDAQTSVT) is disordered. Residues 56 to 66 (TEKERKREPKR) show a composition bias toward basic and acidic residues. Polar residues predominate over residues 74-89 (ATTTLSTPTDAQTSVT). 302-309 (GSAGTGKT) contributes to the ATP binding site. The DNA-binding element occupies 776–796 (HLLYVAMSRVRNPEQLSMSSF). Positions 902 to 929 (HERRQKKMAVEGAKQTDTTKASSGESLE) are disordered. Polar residues predominate over residues 916 to 929 (QTDTTKASSGESLE).

Belongs to the helicase family. PIF1 subfamily. Monomer. Mg(2+) is required as a cofactor.

The protein localises to the mitochondrion. The catalysed reaction is Couples ATP hydrolysis with the unwinding of duplex DNA at the replication fork by translocating in the 5'-3' direction. This creates two antiparallel DNA single strands (ssDNA). The leading ssDNA polymer is the template for DNA polymerase III holoenzyme which synthesizes a continuous strand.. It carries out the reaction ATP + H2O = ADP + phosphate + H(+). Functionally, DNA-dependent ATPase and probable 5'-3' DNA helicase required for the maintenance of mitochondrial (kinetoplast) genome stability. Essential for replication of kinetoplast minicircles. Involved in the segregation of minicircle progeny. In Trypanosoma brucei brucei (strain 927/4 GUTat10.1), this protein is ATP-dependent DNA helicase PIF1.